The following is a 686-amino-acid chain: DNA ligase (686 aa).

Residues 34–38 (DAEYD), 83–84 (SI), and E120 contribute to the NAD(+) site. K122 acts as the N6-AMP-lysine intermediate in catalysis. Residues R143, E180, K298, and K322 each coordinate NAD(+). Residues C420, C423, C438, and C444 each contribute to the Zn(2+) site. The region spanning 603–686 (QSGGILSGKT…ALLGSNKKNG (84 aa)) is the BRCT domain.

Belongs to the NAD-dependent DNA ligase family. LigA subfamily. It depends on Mg(2+) as a cofactor. Requires Mn(2+) as cofactor.

The enzyme catalyses NAD(+) + (deoxyribonucleotide)n-3'-hydroxyl + 5'-phospho-(deoxyribonucleotide)m = (deoxyribonucleotide)n+m + AMP + beta-nicotinamide D-nucleotide.. DNA ligase that catalyzes the formation of phosphodiester linkages between 5'-phosphoryl and 3'-hydroxyl groups in double-stranded DNA using NAD as a coenzyme and as the energy source for the reaction. It is essential for DNA replication and repair of damaged DNA. The polypeptide is DNA ligase (Thiobacillus denitrificans (strain ATCC 25259 / T1)).